Here is a 215-residue protein sequence, read N- to C-terminus: Fanconi anemia core complex-associated protein 24 (215 aa).

The tract at residues 160–215 (LRTVQQIPGVGKVKAPLLLQKFPSIQQLSNASIGELEQVVGQAVAQQIHAFFTQPR) is ruvA domain 2-like.

In terms of assembly, belongs to the multisubunit FA complex composed of FANCA, FANCB, FANCC, FANCE, FANCF, FANCG, FANCL/PHF9, FANCM and FAAP24. Interacts with FANCM.

Its subcellular location is the nucleus. Functionally, plays a role in DNA repair through recruitment of the FA core complex to damaged DNA. Regulates FANCD2 monoubiquitination upon DNA damage. Induces chromosomal instability as well as hypersensitivity to DNA cross-linking agents, when repressed. Targets FANCM/FAAP24 complex to the DNA, preferentially to single strand DNA. This chain is Fanconi anemia core complex-associated protein 24, found in Homo sapiens (Human).